The chain runs to 224 residues: Heme response regulator HssR (224 aa).

The region spanning 3-116 is the Response regulatory domain; the sequence is QCLVVDDDPR…ELIFRIRAVL (114 aa). 4-aspartylphosphate is present on aspartate 52. The ompR/PhoB-type DNA-binding region spans 124-222; the sequence is NSEMTIGNLT…VRGQGYKVEN (99 aa).

In terms of processing, phosphorylated by HssS.

Its subcellular location is the cytoplasm. Member of the two-component regulatory system HssS/HssR involved in intracellular heme homeostasis and tempering of staphylococcal virulence. Phosphorylated HssR binds to a direct repeat sequence within hrtAB promoter and activates the expression of hrtAB, an efflux pump, in response to extracellular heme, hemin, hemoglobin or blood. This is Heme response regulator HssR (hssR) from Staphylococcus aureus (strain Mu50 / ATCC 700699).